A 412-amino-acid chain; its full sequence is Subtilisin-like protease 6 (412 aa).

The signal sequence occupies residues 1 to 20; it reads MGFITKAIPIVLAALSTVNG. Positions 21–127 are excised as a propeptide; it reads ARILEAGPHA…VRATTNGTNL (107 aa). The Inhibitor I9 domain occupies 36–120; sequence KYIVVMKKDV…FIEPDFVVRA (85 aa). Residues 135–412 form the Peptidase S8 domain; it reads SWGLARVSTR…SKLIYNGSGK (278 aa). Residues Asp-167 and His-198 each act as charge relay system in the active site. Asn-252, Asn-264, and Asn-325 each carry an N-linked (GlcNAc...) asparagine glycan. Ser-358 functions as the Charge relay system in the catalytic mechanism. Asn-408 is a glycosylation site (N-linked (GlcNAc...) asparagine).

This sequence belongs to the peptidase S8 family.

The protein resides in the secreted. Secreted subtilisin-like serine protease with keratinolytic activity that contributes to pathogenicity. The sequence is that of Subtilisin-like protease 6 (SUB6) from Trichophyton verrucosum (strain HKI 0517).